The sequence spans 1235 residues: MSLNIPPKPEESLWTDDQWKAIQAKGNNVLVAAAAGSGKTAVLVTRIIEKLIDESANLNVDELLIVTFTNASAAEMKFRIGKGLEEALGQNPDSAHLKRQVALLNYASISTLHSFCLEIIRKYYFEADIDPSFRLIEPIESSMIRDEVLEGLLEQEYGIENNEAFFHLVESFTGDRSDAELHSLISKLYDFSRANPDPNAWLEAMVNFYNTEEITSITELPYFPIIKEDIELRVNQAKNYLLNAINYANENNGPAPYLATLENDLVQIQALSELNWSSWTHLKTSIENIDFKRIPTLKNKSDYDEVYVEEAKKFRDAAKKEMKNIATDWFSREEVNCLSDLEKMKPDIQTLSELVKKFSANFFEEKQQRGVLDFNDLEHLALKILLNDDKASEVAQNYQKQFKEVLIDEYQDTNMVQETILRLVTNPSEAQGNLFMVGDVKQSIYRFRLAEPTLFMTKYQTFQQDGSGNGIRIDLSQNFRSRKEVLDATNFIFRQLMDKHIAEIDYDTAAELTLGANFPETNAMETELLLIDMKTEDTETEDELSPQELQKNQVESRAIAMKIREMIDNKFPIYDKKLKQNRPIQYRDIIILSRAMTSAPDMEEAMKVQDIPFYANNNSGYFETTEVATMIALMKVVDNPYQDIPLAAVLRSPIIGLNEEELGQIRMAKKKGYFYDALLTYKDITVSETANKISDFVQQLNNWRELSIRENLTSLIWQIYQETNFYEFVGGLPGGKQRQANLRALYDRANQYEKTSFRGLFRFVRFVERLEIRGDDLGTAKTLGEKEDVVRMMTIHASKGLEFPVVIVSGLSRKFNMRDIYSKTLLDKDYGFASSYRDVEKMIVYPTIMQQAIKQKKSREMIAEEMRVLYVALTRAEEKLILVATVPDFEKTSKNWLQVAKEKETILPAATRAKAKCYLDWIGNATIRHPAFKELLCEEIIQTLATEMKLQIEIKTKEMFLTNELERAESDNWLENIKEHQPVPIQSPYKDEIQRYMEYEYQNEAATEIRAKQSVTELKRQFSLQDSWSDTTLLKEFQKVSLDRPKFLQKNKLSATEIGTAMHTLMQAVSLDYKPTKEDLEQLLHTMREKDILTDVQIKAINIKQILDFFESPLGETMLQKKDLVKREVPFSYLLPVSELYEKVDLDERVLIQGVVDSMIEEEETITLIDYKTDKIEGRYADWNAAEKVMKERYHIQIKLYAEAIQAISGKKVAAAYLYFFDGQHICQINTKEGL.

Positions 12–482 (SLWTDDQWKA…IDLSQNFRSR (471 aa)) constitute a UvrD-like helicase ATP-binding domain. 33–40 (AAAGSGKT) contributes to the ATP binding site. Positions 509–800 (AAELTLGANF…RMMTIHASKG (292 aa)) constitute a UvrD-like helicase C-terminal domain.

It belongs to the helicase family. AddA subfamily. Heterodimer of AddA and AddB/RexB. It depends on Mg(2+) as a cofactor.

It catalyses the reaction Couples ATP hydrolysis with the unwinding of duplex DNA by translocating in the 3'-5' direction.. It carries out the reaction ATP + H2O = ADP + phosphate + H(+). In terms of biological role, the heterodimer acts as both an ATP-dependent DNA helicase and an ATP-dependent, dual-direction single-stranded exonuclease. Recognizes the chi site generating a DNA molecule suitable for the initiation of homologous recombination. The AddA nuclease domain is required for chi fragment generation; this subunit has the helicase and 3' -&gt; 5' nuclease activities. The protein is ATP-dependent helicase/nuclease subunit A of Listeria monocytogenes serovar 1/2a (strain ATCC BAA-679 / EGD-e).